The chain runs to 504 residues: Anaerobic nitric oxide reductase transcription regulator NorR (504 aa).

Aspartate 57 carries the post-translational modification 4-aspartylphosphate. One can recognise a Sigma-54 factor interaction domain in the interval 187 to 416; the sequence is MIGLSPGMTQ…LEHAIHRAVV (230 aa). Residues 215–222 and 278–287 each bind ATP; these read GETGTGKE and ADNGTLFLDE. The H-T-H motif DNA-binding region spans 479 to 498; it reads WAACARMLETDVANLHRLAK.

It functions in the pathway nitrogen metabolism; nitric oxide reduction. Its function is as follows. Required for the expression of anaerobic nitric oxide (NO) reductase, acts as a transcriptional activator for at least the norVW operon. Activation also requires sigma-54. The polypeptide is Anaerobic nitric oxide reductase transcription regulator NorR (Escherichia coli O6:H1 (strain CFT073 / ATCC 700928 / UPEC)).